A 29-amino-acid chain; its full sequence is Varv peptide F (29 aa).

The cyclopeptide (Gly-Asn) cross-link spans 1 to 29; it reads GVPICGETCTLGTCYTAGCSCSWPVCTRN. Cystine bridges form between Cys5-Cys19, Cys9-Cys21, and Cys14-Cys26.

In terms of processing, this is a cyclic peptide.

In terms of biological role, probably participates in a plant defense mechanism. Has cytotoxic activity against a variety of drug-resistant and drug-sensitive human tumor cell lines. The polypeptide is Varv peptide F (Viola arvensis (European field pansy)).